The primary structure comprises 599 residues: Crinkler effector protein 8 (599 aa).

A signal peptide spans 1–17 (MVTLFCAVVGVAGSTFP). Residues 18–52 (VDINENKSVGHLKKAIKEEKMYQFPADELQLFLAK) form an LQLFLAK domain region. Residue Asn-23 is glycosylated (N-linked (GlcNAc...) asparagine). The interval 53-109 (AGGNAWLSSLTEDVKKLKKGEKTALVKSLTQEEKELQGEDPISECLEGMDPPKVKQI) is DWL domain. Residues 110–116 (HVLVALP) carry the HVLVXXP motif motif. A C-terminal D2 effector domain region spans residues 117–590 (PGTSSAPISD…EAAEQESQGK (474 aa)). Phosphoserine is present on residues Ser-249, Ser-281, and Ser-385. A Protein kinase domain is found at 289–590 (LSKKLVWSYG…EAAEQESQGK (302 aa)). Residue Asp-470 is the Proton acceptor of the active site. 2 positions are modified to phosphoserine: Ser-474 and Ser-587. The interval 577–599 (RFEREAAEQESQGKGVRKKHRRA) is disordered. Residues 590 to 599 (KGVRKKHRRA) carry the Host nuclear localization signal motif.

It in the N-terminal section; belongs to the Crinkler effector family. This sequence in the C-terminal section; belongs to the protein kinase superfamily. Dimerizes in host plants. Post-translationally, autophosphorylated at Ser-249, Ser-281, Ser-385, Ser-474 and Ser-587. Additional serines or threonines are also targeted for phosphorylation.

The protein resides in the secreted. It is found in the host nucleus. It catalyses the reaction L-seryl-[protein] + ATP = O-phospho-L-seryl-[protein] + ADP + H(+). It carries out the reaction L-threonyl-[protein] + ATP = O-phospho-L-threonyl-[protein] + ADP + H(+). Functionally, secreted effector that induces cell death when expressed in host plants. Acts as a kinase and is able to autophosphorylate, however its cell death inducing ability is not a direct result of its kinase activity, but rather a consequence of the phosphorylated state of the five identified serine residues in the CRN8 protein. The sequence is that of Crinkler effector protein 8 from Phytophthora infestans (Potato late blight agent).